The primary structure comprises 130 residues: Small ribosomal subunit protein uS11 (130 aa).

The protein belongs to the universal ribosomal protein uS11 family. As to quaternary structure, part of the 30S ribosomal subunit. Interacts with proteins S7 and S18. Binds to IF-3.

Its function is as follows. Located on the platform of the 30S subunit, it bridges several disparate RNA helices of the 16S rRNA. Forms part of the Shine-Dalgarno cleft in the 70S ribosome. This is Small ribosomal subunit protein uS11 from Nitratiruptor sp. (strain SB155-2).